Here is a 434-residue protein sequence, read N- to C-terminus: Zinc carboxypeptidase (434 aa).

A signal peptide spans methionine 1–alanine 33. A propeptide spans lysine 34–glutamine 114 (activation peptide). A Peptidase M14 domain is found at glycine 122–serine 423. Zn(2+) contacts are provided by histidine 183 and glutamate 186. Positions glycine 270 to histidine 295 are disordered. The span at alanine 282–histidine 293 shows a compositional bias: basic residues. Histidine 315 is a binding site for Zn(2+). Glutamate 388 (proton donor/acceptor) is an active-site residue.

This sequence belongs to the peptidase M14 family. Zn(2+) serves as cofactor.

The catalysed reaction is Releases a C-terminal residue, which may be hydrophobic or positively charged.. Functionally, carboxypeptidase that possesses the specificities of both mammalian Cpase A and B. Thus shows broad substrate specificity, being able to cleave Cbz-Gly-Leu, Cbz-Gly-Val, Cbz-Gly-Phe, Cbz-Gly-Lys and Bz-Gly-Arg in vitro. The polypeptide is Zinc carboxypeptidase (Saccharothrix mutabilis subsp. capreolus (Streptomyces capreolus)).